A 593-amino-acid chain; its full sequence is ETS-related transcription factor Elf-2 (593 aa).

A Phosphoserine modification is found at Ser-107. Residues 146–201 (VEVSTEESEPMDTSPIPTSPDSHEPMKKKKVGRKPKTQQSPISNGSPELGIKKKPR) are disordered. Positions 171–181 (MKKKKVGRKPK) are enriched in basic residues. Thr-182 is subject to Phosphothreonine. A compositionally biased stretch (polar residues) spans 182–191 (TQQSPISNGS). Phosphoserine is present on residues Ser-185 and Ser-191. A DNA-binding region (ETS) is located at residues 208-290 (TYLWEFLLDL…EGQRLVYQFK (83 aa)). Phosphoserine occurs at positions 363 and 372. Thr-376 is modified (phosphothreonine). Phosphoserine is present on Ser-430. At Arg-494 the chain carries Omega-N-methylarginine. At Thr-521 the chain carries Phosphothreonine. Lys-536 is covalently cross-linked (Glycyl lysine isopeptide (Lys-Gly) (interchain with G-Cter in SUMO2)).

This sequence belongs to the ETS family. Interacts with the LIM domains of LMO2. Interacts via its N-terminal region with RUNX1. Expressed in all fetal and adult tissues examined. Among fetal tissues, highest levels of expression detected in heart, lung, liver and kidney, and lower levels in brain. Among adult tissues, highest levels of expression detected in heart, placenta, lung, skeletal muscle, spleen, thymus, testis and ovary. Moderate expression in prostate, small intestine, kidney, liver and pancreas, and weak expression in colon, brain and peripheral blood lymphocytes.

Its subcellular location is the nucleus. Its function is as follows. Isoform 1 transcriptionally activates the LYN and BLK promoters and acts synergistically with RUNX1 to transactivate the BLK promoter. Functionally, isoform 2 may function in repression of RUNX1-mediated transactivation. This chain is ETS-related transcription factor Elf-2, found in Homo sapiens (Human).